The primary structure comprises 571 residues: uncharacterized protein (571 aa).

Disordered stretches follow at residues 71 to 128 (TNHY…RVTA), 142 to 258 (NKND…PQNE), and 298 to 336 (LNRQ…TTKR). Residues 88-113 (PNRSGVSSPVNDGASSPTQRGGTTPA) show a composition bias toward polar residues. Positions 168-184 (RGYPGPGPRGYPGPGPR) are enriched in pro residues. The span at 205–215 (QGPRRYSCPGP) shows a compositional bias: low complexity. Residues 217-234 (GYPGPGSSGRPDPGGGLQ) are compositionally biased toward gly residues. Positions 311-326 (PEKQQTPPPEETQNAQ) are enriched in low complexity.

This is an uncharacterized protein from Drosophila melanogaster (Fruit fly).